The following is a 70-amino-acid chain: Gas vesicle protein A (70 aa).

This sequence belongs to the gas vesicle GvpA family. As to quaternary structure, the gas vesicle shell is 2 nm thick and consists of a single layer of this protein. It forms helical ribs nearly perpendicular to the long axis of the vesicle.

The protein resides in the gas vesicle shell. Its function is as follows. Gas vesicles are hollow, gas filled proteinaceous nanostructures found in some microorganisms. During planktonic growth they allow positioning of the organism at a favorable depth for light or nutrient acquisition. GvpA forms the protein shell. The polypeptide is Gas vesicle protein A (Ancylobacter aquaticus).